A 487-amino-acid chain; its full sequence is UDP-N-acetylmuramoyl-L-alanyl-D-glutamate--2,6-diaminopimelate ligase (487 aa).

Residues Leu-23 and Ser-25 each coordinate UDP-N-acetyl-alpha-D-muramoyl-L-alanyl-D-glutamate. 108-114 (GTNGKTS) is an ATP binding site. UDP-N-acetyl-alpha-D-muramoyl-L-alanyl-D-glutamate-binding positions include 150 to 151 (TT), Ser-177, Gln-183, and Arg-185. Lys-217 carries the N6-carboxylysine modification. Residues Arg-378, 402–405 (DNPR), Gly-453, and Glu-457 contribute to the meso-2,6-diaminopimelate site. The Meso-diaminopimelate recognition motif motif lies at 402 to 405 (DNPR).

The protein belongs to the MurCDEF family. MurE subfamily. Requires Mg(2+) as cofactor. In terms of processing, carboxylation is probably crucial for Mg(2+) binding and, consequently, for the gamma-phosphate positioning of ATP.

The protein localises to the cytoplasm. It carries out the reaction UDP-N-acetyl-alpha-D-muramoyl-L-alanyl-D-glutamate + meso-2,6-diaminopimelate + ATP = UDP-N-acetyl-alpha-D-muramoyl-L-alanyl-gamma-D-glutamyl-meso-2,6-diaminopimelate + ADP + phosphate + H(+). It participates in cell wall biogenesis; peptidoglycan biosynthesis. Its function is as follows. Catalyzes the addition of meso-diaminopimelic acid to the nucleotide precursor UDP-N-acetylmuramoyl-L-alanyl-D-glutamate (UMAG) in the biosynthesis of bacterial cell-wall peptidoglycan. The protein is UDP-N-acetylmuramoyl-L-alanyl-D-glutamate--2,6-diaminopimelate ligase of Pseudomonas syringae pv. tomato (strain ATCC BAA-871 / DC3000).